The sequence spans 549 residues: MTVKSIRRAYHVIRTALHYGLDDLLPPKLTPWYFKLLRYCFFWLRNQHKDKVGGERLKLAMQELGPVYIKFGQMLSTRRDLLSDEWAEELAMLQDRVPPFDSAIARESIEKELNAPIERYFNDFDDTPLASASISQVHTATLKSNGAAVVLKVLRPDVEKKVHADLLLMSQAADFLERLLGANNRLRPAEVVEDYRTTIEGELNLKLEALNAIKLRNNFIDSNALYIPYMYEELCFTRLIVMERIDGIPVSDKVALEAQGTNLKLLAERGVELFFTQVFRDNFFHADMHPGNVFVSREHPNDPFYIGLDCGIMGTLTDEDKRYLAENFLAFFNRDYRRIAQLYIESGWVSADTDVGAFEQAVKVVCEPMFNKPLDEISFGHVLLELFRTARRFDMVVQPQLVLLEKTLLYIEGLGRQLYPQLDLWQTAKPFLEQWMAEQVGPKAMAAKVKQQLPYWAEHLPELPELIYDNLKIGRDLSKNQNKLLDRYLKHQQKAHKSNYLLITSAILVICGTILLNQDATLWPSYGSIGIGITLWVLGWRSRPKNRKI.

One can recognise a Protein kinase domain in the interval 123–501 (DFDDTPLASA…QQKAHKSNYL (379 aa)). ATP is bound by residues 129–137 (LASASISQV) and lysine 152. Aspartate 287 acts as the Proton acceptor in catalysis. Transmembrane regions (helical) follow at residues 498-518 (SNYLLITSAILVICGTILLNQ) and 520-540 (ATLWPSYGSIGIGITLWVLGW).

It belongs to the ABC1 family. UbiB subfamily.

The protein localises to the cell inner membrane. The protein operates within cofactor biosynthesis; ubiquinone biosynthesis [regulation]. Its function is as follows. Is probably a protein kinase regulator of UbiI activity which is involved in aerobic coenzyme Q (ubiquinone) biosynthesis. The sequence is that of Probable protein kinase UbiB from Shewanella pealeana (strain ATCC 700345 / ANG-SQ1).